Consider the following 514-residue polypeptide: Retron Vc95 probable ATPase (514 aa).

The ATP-binding motif lies at 92–99 (GNNGSGKS).

In terms of biological role, probable ATPase component of antiviral defense system retron Vc95, composed of a non-coding RNA (ncRNA), a reverse transcriptase (RT), this protein and a putative HNH endonuclease. Expression of retron Vc95 confers protection against bacteriophages T2, T4 and T6. At multiplicity of infection (MOI) of 0.02 cultures slow growth when infected with T4 but do not collapse, at MOI 2 cultures enter growth stasis. The chain is Retron Vc95 probable ATPase from Vibrio cholerae serotype O1 biovar El Tor.